We begin with the raw amino-acid sequence, 264 residues long: Undecaprenyl-diphosphatase (264 aa).

The next 7 helical transmembrane spans lie at 34–54 (LLNLPIAIAYSFGLFMEMGSI), 75–95 (LLYLAIITIITGLVGVPLYII), 104–124 (YDPSIPMIILGIALIVDGLYI), 137–157 (LSLKNIILIGIAQGLAALPGV), 180–200 (YSYLAYIPAAVGAVGTTILFS), 207–227 (VISLIGIGGVLISVISAFIIG), and 243–263 (IYIIDFTLGGIAIVVSVLTIL).

Belongs to the UppP family.

The protein localises to the cell membrane. It catalyses the reaction di-trans,octa-cis-undecaprenyl diphosphate + H2O = di-trans,octa-cis-undecaprenyl phosphate + phosphate + H(+). Functionally, catalyzes the dephosphorylation of undecaprenyl diphosphate (UPP). This Sulfurisphaera tokodaii (strain DSM 16993 / JCM 10545 / NBRC 100140 / 7) (Sulfolobus tokodaii) protein is Undecaprenyl-diphosphatase.